The chain runs to 506 residues: Trans-cinnamate 4-monooxygenase (506 aa).

The chain crosses the membrane as a helical span at residues 3 to 23; sequence LLLLEKALLGLFAAAVVAIAV. Residues 213–218 and Ala306 contribute to the (E)-cinnamate site; that span reads RSRLAQ. Cys447 is a binding site for heme.

This sequence belongs to the cytochrome P450 family. Requires heme as cofactor.

Its subcellular location is the membrane. It carries out the reaction (E)-cinnamate + reduced [NADPH--hemoprotein reductase] + O2 = (E)-4-coumarate + oxidized [NADPH--hemoprotein reductase] + H2O + H(+). It functions in the pathway phenylpropanoid metabolism; trans-4-coumarate biosynthesis; trans-4-coumarate from trans-cinnamate: step 1/1. Catalyzes the first oxidative step of the phenylpropanoid pathway in higher plants by transforming trans-cinnamate into p-coumarate. The compounds formed by this pathway are essential components for lignification, pollination, and defense against ultraviolet light, predators and pathogens. The protein is Trans-cinnamate 4-monooxygenase (CYP73A2) of Ruta graveolens (Common rue).